The chain runs to 243 residues: Carboxy-S-adenosyl-L-methionine synthase (243 aa).

Residues Y40, 65-67, 90-91, 118-119, N133, and R200 each bind S-adenosyl-L-methionine; these read GCS, DN, and DI.

Belongs to the class I-like SAM-binding methyltransferase superfamily. Cx-SAM synthase family. In terms of assembly, homodimer.

It carries out the reaction prephenate + S-adenosyl-L-methionine = carboxy-S-adenosyl-L-methionine + 3-phenylpyruvate + H2O. Catalyzes the conversion of S-adenosyl-L-methionine (SAM) to carboxy-S-adenosyl-L-methionine (Cx-SAM). The protein is Carboxy-S-adenosyl-L-methionine synthase of Shewanella baltica (strain OS155 / ATCC BAA-1091).